The sequence spans 255 residues: NAD kinase (255 aa).

Asp44 acts as the Proton acceptor in catalysis. NAD(+)-binding positions include 44 to 45 (DG), His49, 114 to 115 (NE), Asp144, Ala152, 155 to 160 (SAYNLS), and Gln216.

It belongs to the NAD kinase family. The cofactor is a divalent metal cation.

The protein resides in the cytoplasm. The enzyme catalyses NAD(+) + ATP = ADP + NADP(+) + H(+). Its function is as follows. Involved in the regulation of the intracellular balance of NAD and NADP, and is a key enzyme in the biosynthesis of NADP. Catalyzes specifically the phosphorylation on 2'-hydroxyl of the adenosine moiety of NAD to yield NADP. The polypeptide is NAD kinase (Rickettsia typhi (strain ATCC VR-144 / Wilmington)).